A 304-amino-acid chain; its full sequence is Small ribosomal subunit protein uS3 (304 aa).

One can recognise a KH type-2 domain in the interval 17–86; that stretch reads MDEYFAKQLS…NPQIDAQEVK (70 aa).

The protein belongs to the universal ribosomal protein uS3 family. In terms of assembly, part of the 30S ribosomal subunit.

In terms of biological role, binds the lower part of the 30S subunit head. This is Small ribosomal subunit protein uS3 from Methanococcoides burtonii (strain DSM 6242 / NBRC 107633 / OCM 468 / ACE-M).